The primary structure comprises 548 residues: Ankyrin repeat domain-containing protein SOWAHA (548 aa).

An N-terminal signal peptide occupies residues 1-19; it reads MALAAAAAAAAAAAGVSQA. A disordered region spans residues 114-212; it reads EDNCAPGAPH…PPTAQVPPQK (99 aa). The span at 136 to 153 shows a compositional bias: polar residues; that stretch reads SAPSELQHTPETLPSEVT. The segment covering 198–212 has biased composition (pro residues); that stretch reads GPEPAPPTAQVPPQK. Serine 258 is modified (phosphoserine). ANK repeat units lie at residues 344-373 and 383-413; these read SGFT…RGGA and GGYT…QVHV. Residues 512–548 are disordered; it reads PRKKTKIRGGLPSFTEISHRSTPGPLAGLVPSLPPPT.

It belongs to the SOWAH family.

This chain is Ankyrin repeat domain-containing protein SOWAHA (Sowaha), found in Mus musculus (Mouse).